A 551-amino-acid chain; its full sequence is F-box only protein 31 (551 aa).

The interval 12–38 (QSGGCRRRQQRKGAGNGPELEDEEEED) is disordered. Residues 58–104 (PRSLLHLPPEILVEIFSSLPGTELPSLAQVCRKFRQILTTDTIWKRR) enclose the F-box domain. 4 residues coordinate Zn(2+): Cys-229, His-237, Cys-253, and His-259. Residues 402 to 459 (REQRQTGNEEDDGRGAGPDKAEHSQQPAPVLRPANEDANKVDGGDGEEQKPPNVQSFV) are disordered. 2 stretches are compositionally biased toward basic and acidic residues: residues 414 to 424 (GRGAGPDKAEH) and 435 to 451 (ANEDANKVDGGDGEEQK).

This sequence belongs to the FBXO31 family. Part of a SCF (SKP1-cullin-F-box) protein ligase complex SCF(FBXO31).

It localises to the cytoplasm. Its pathway is protein modification; protein ubiquitination. In terms of biological role, substrate-recognition component of the SCF(FBXO31) protein ligase complex, which specifically mediates the ubiquitination of proteins amidated at their C-terminus in response to oxidative stress, leading to their degradation by the proteasome. Fbxo31 specifically recognizes and binds C-terminal peptides bearing an amide: C-terminal amidation in response to oxidative stress takes place following protein fragmentation. The SCF(FBXO31) also plays a role in G1 arrest following DNA damage by mediating ubiquitination of phosphorylated cyclin-D1 (ccnd1), promoting its degradation by the proteasome, resulting in G1 arrest. The SCF(FBXO31) complex is however not a major regulator of ccnd1 stability during the G1/S transition. This is F-box only protein 31 (fbxo31) from Xenopus tropicalis (Western clawed frog).